Here is a 253-residue protein sequence, read N- to C-terminus: NAD-dependent protein deacetylase (253 aa).

A Deacetylase sirtuin-type domain is found at 3–253; that stretch reads APSLSSGVEQ…GETLGPFVGN (251 aa). NAD(+) contacts are provided by alanine 29, threonine 33, phenylalanine 40, arginine 41, glutamine 106, isoleucine 108, aspartate 109, and histidine 126. Phenylalanine 40 contacts nicotinamide. Nicotinamide is bound by residues isoleucine 108 and aspartate 109. Histidine 126 acts as the Proton acceptor in catalysis. Zn(2+) contacts are provided by cysteine 134, cysteine 137, cysteine 159, and cysteine 162. NAD(+) is bound by residues serine 200, serine 201, asparagine 225, aspartate 242, and isoleucine 243.

This sequence belongs to the sirtuin family. Class U subfamily. The cofactor is Zn(2+).

It is found in the cytoplasm. The enzyme catalyses N(6)-acetyl-L-lysyl-[protein] + NAD(+) + H2O = 2''-O-acetyl-ADP-D-ribose + nicotinamide + L-lysyl-[protein]. NAD-dependent protein deacetylase which modulates the activities of several enzymes which are inactive in their acetylated form. This chain is NAD-dependent protein deacetylase, found in Rhodopseudomonas palustris (strain ATCC BAA-98 / CGA009).